The chain runs to 136 residues: NADH-ubiquinone oxidoreductase chain 3 (136 aa).

The next 3 helical transmembrane spans lie at 5 to 25 (TFFLFLIPVLAIILLAVNLIF), 55 to 75 (ISFFIFALLFLLFDLEILLVY), and 85 to 105 (GIYGLVIMLVFFLVGTLGFAF).

Belongs to the complex I subunit 3 family.

It is found in the mitochondrion membrane. The catalysed reaction is a ubiquinone + NADH + 5 H(+)(in) = a ubiquinol + NAD(+) + 4 H(+)(out). Functionally, core subunit of the mitochondrial membrane respiratory chain NADH dehydrogenase (Complex I) that is believed to belong to the minimal assembly required for catalysis. Complex I functions in the transfer of electrons from NADH to the respiratory chain. The immediate electron acceptor for the enzyme is believed to be ubiquinone. In Emericella nidulans (Aspergillus nidulans), this protein is NADH-ubiquinone oxidoreductase chain 3 (nd3).